The primary structure comprises 42 residues: Kappa-actitoxin-Ael2a (42 aa).

3 disulfides stabilise this stretch: C4–C37, C6–C30, and C20–C38.

The protein belongs to the sea anemone type 3 (BDS) potassium channel toxin family.

Its subcellular location is the secreted. It localises to the nematocyst. Peptide with both antimicrobial and neurotoxin activities. This toxin acts both on ERG potassium channels and sodium channels. It potently and reversibly inhibits human Kv11.1/KCNH2/ERG1 (IC(50)=34 nM), rat Kv11.1/KCNH2/ERG1 and Kv11.3/KCNH7/ERG3 voltage-gated potassium channels in a similar potency. It acts as a gating-modifier toxin that shifts the voltage-dependence of ERG activation in the positive direction and suppresses its current amplitudes elicited by strong depolarizing pulses. On sodium channels, it blocks Nav1.2/SCN2A (EC(50)=31 nM), Nav1.3/SCN3A, Nav1.4/SCN4A, Nav1.5/SCN5A, Nav1.6/SCN8A, Nav1.8/SCN10A (EC(50)=92 nM). It may act by binding at site 1 or close by, only when the pore is in an open configuration. Shows antibacterial activity against the Gram-negative bacterium S.typhimurium, but not on the bacteria B.subtilis, S.aureus, and P.aeruginosa. In vivo, this toxin does not induce neurotoxic symptoms when injected into mice. The polypeptide is Kappa-actitoxin-Ael2a (Anthopleura elegantissima (Green aggregating anemone)).